Reading from the N-terminus, the 326-residue chain is Biotin synthase (326 aa).

The region spanning 51–278 is the Radical SAM core domain; sequence NRVQVSRLIS…KSFVRLSAGR (228 aa). [4Fe-4S] cluster is bound by residues Cys66, Cys70, and Cys73. Cys110, Cys141, Cys201, and Arg273 together coordinate [2Fe-2S] cluster.

Belongs to the radical SAM superfamily. Biotin synthase family. As to quaternary structure, homodimer. [4Fe-4S] cluster serves as cofactor. [2Fe-2S] cluster is required as a cofactor.

It catalyses the reaction (4R,5S)-dethiobiotin + (sulfur carrier)-SH + 2 reduced [2Fe-2S]-[ferredoxin] + 2 S-adenosyl-L-methionine = (sulfur carrier)-H + biotin + 2 5'-deoxyadenosine + 2 L-methionine + 2 oxidized [2Fe-2S]-[ferredoxin]. It participates in cofactor biosynthesis; biotin biosynthesis; biotin from 7,8-diaminononanoate: step 2/2. Catalyzes the conversion of dethiobiotin (DTB) to biotin by the insertion of a sulfur atom into dethiobiotin via a radical-based mechanism. The chain is Biotin synthase from Paramagnetospirillum magneticum (strain ATCC 700264 / AMB-1) (Magnetospirillum magneticum).